Reading from the N-terminus, the 199-residue chain is Recombination protein RecR (199 aa).

Residues 57–72 form a C4-type zinc finger; that stretch reads CSQCHNITDTDPCQIC. A Toprim domain is found at 80–176; sequence TTICVVQESR…KVTRLAHGLP (97 aa).

It belongs to the RecR family.

Its function is as follows. May play a role in DNA repair. It seems to be involved in an RecBC-independent recombinational process of DNA repair. It may act with RecF and RecO. In Shouchella clausii (strain KSM-K16) (Alkalihalobacillus clausii), this protein is Recombination protein RecR.